A 171-amino-acid chain; its full sequence is Calcium-binding allergen Ole e 8 (171 aa).

EF-hand domains lie at 16-51, 52-87, 92-127, and 128-163; these read QEPNEVQGVFNRFDANGDGKISGDELAGVLKALGSN, TSKEEIGRIMEEIDTDKDGFINVQEFAAFVKAETDP, GGENELKEAFELYDQDHNGLISSVELHKILTRLGER, and YAEHDCVEMIKSVDSDGDGYVSFEEFKKMMTNKSGN. Ca(2+)-binding residues include aspartate 29, asparagine 31, aspartate 33, lysine 35, glutamate 40, aspartate 65, aspartate 67, aspartate 69, glutamate 76, aspartate 105, aspartate 107, asparagine 109, glutamate 116, aspartate 141, aspartate 143, aspartate 145, tyrosine 147, and glutamate 152.

Homodimer. In terms of tissue distribution, expressed in pollen.

The protein is Calcium-binding allergen Ole e 8 of Olea europaea (Common olive).